Reading from the N-terminus, the 92-residue chain is Costars family protein ST45-2 (92 aa).

The residue at position 1 (methionine 1) is an N-acetylmethionine.

This sequence belongs to the costars family.

In Eutrema halophilum (Salt cress), this protein is Costars family protein ST45-2.